A 398-amino-acid chain; its full sequence is MNNNTLNITNQRTAAAMSQIYFLVVYQTAVMIVSLLGNLFLLFVIFRANQVMKRRVSPVQLLIIHTCVADLLFALLSLGTEILTLRTYPQYYGSNFVCKLMRYVQMFPMYASPFLLVAISADRYQAICRPLAHFRSSRYRRPNWMAAIAWGLALVLSIPQFFVWTKHSKTGRCSTIYGQNKNTVKITYVIMFNTLAWLLPSILAAVFYYCVCKAVRLSSTKSVRAMDSQKRNGKYSSGATEDYIEELRKKSKGFRQQMSEFDRKRVQTVRLTITIVACNFFLWMPFCLINVIQALWPEISHIMFINYVAILGNLNSCLNPWIYILFNRSHVRKALCRSRRSFTEVTKKRSFENFECSSTATMNNNYNNCHAYTAFSNRSQLKFDSYATDSTSLKTNSN.

The Extracellular segment spans residues 1–25 (MNNNTLNITNQRTAAAMSQIYFLVV). Residues Asn-3 and Asn-7 are each glycosylated (N-linked (GlcNAc...) asparagine). A helical membrane pass occupies residues 26–46 (YQTAVMIVSLLGNLFLLFVIF). Over 47–58 (RANQVMKRRVSP) the chain is Cytoplasmic. Residues 59-79 (VQLLIIHTCVADLLFALLSLG) traverse the membrane as a helical segment. Over 80-99 (TEILTLRTYPQYYGSNFVCK) the chain is Extracellular. Residues Cys-98 and Cys-173 are joined by a disulfide bond. Residues 100–120 (LMRYVQMFPMYASPFLLVAIS) form a helical membrane-spanning segment. Over 121-143 (ADRYQAICRPLAHFRSSRYRRPN) the chain is Cytoplasmic. A helical membrane pass occupies residues 144-164 (WMAAIAWGLALVLSIPQFFVW). At 165–187 (TKHSKTGRCSTIYGQNKNTVKIT) the chain is on the extracellular side. A helical membrane pass occupies residues 188 to 208 (YVIMFNTLAWLLPSILAAVFY). The Cytoplasmic portion of the chain corresponds to 209-271 (YCVCKAVRLS…DRKRVQTVRL (63 aa)). A helical membrane pass occupies residues 272–292 (TITIVACNFFLWMPFCLINVI). The Extracellular segment spans residues 293-302 (QALWPEISHI). Residues 303–325 (MFINYVAILGNLNSCLNPWIYIL) form a helical membrane-spanning segment. Residues 326–398 (FNRSHVRKAL…DSTSLKTNSN (73 aa)) lie on the Cytoplasmic side of the membrane.

This sequence belongs to the G-protein coupled receptor 1 family. Vasopressin/oxytocin receptor subfamily. As to expression, detected in the ADL sensory neurons, the RMED and RMEV motor neurons, and the PQR tail neuron. In males, detected in SPC tail neurons involved in spicule penetration and sperm transfer, and male-specific oblique muscles involved in vulval contact.

Its subcellular location is the cell membrane. Not directly activated by nematocin. May modulate activity of the nematocin receptor ntr-1, leading to reduced intracellular cAMP production. Plays a role in male mating behavior. In Caenorhabditis elegans, this protein is Nematocin receptor 2.